The chain runs to 316 residues: Transaldolase A (316 aa).

K131 functions as the Schiff-base intermediate with substrate in the catalytic mechanism.

The protein belongs to the transaldolase family. Type 1 subfamily. In terms of assembly, homodimer.

It is found in the cytoplasm. The catalysed reaction is D-sedoheptulose 7-phosphate + D-glyceraldehyde 3-phosphate = D-erythrose 4-phosphate + beta-D-fructose 6-phosphate. It functions in the pathway carbohydrate degradation; pentose phosphate pathway; D-glyceraldehyde 3-phosphate and beta-D-fructose 6-phosphate from D-ribose 5-phosphate and D-xylulose 5-phosphate (non-oxidative stage): step 2/3. Functionally, transaldolase is important for the balance of metabolites in the pentose-phosphate pathway. The sequence is that of Transaldolase A from Shigella flexneri.